An 80-amino-acid polypeptide reads, in one-letter code: Exodeoxyribonuclease 7 small subunit (80 aa).

It belongs to the XseB family. Heterooligomer composed of large and small subunits.

It localises to the cytoplasm. The enzyme catalyses Exonucleolytic cleavage in either 5'- to 3'- or 3'- to 5'-direction to yield nucleoside 5'-phosphates.. In terms of biological role, bidirectionally degrades single-stranded DNA into large acid-insoluble oligonucleotides, which are then degraded further into small acid-soluble oligonucleotides. This chain is Exodeoxyribonuclease 7 small subunit, found in Photobacterium profundum (strain SS9).